A 98-amino-acid polypeptide reads, in one-letter code: Large ribosomal subunit protein eL21 (98 aa).

Residues 1 to 24 (MVKMSHGPRSGSRRKLTKSAEERK) are disordered.

It belongs to the eukaryotic ribosomal protein eL21 family.

The protein is Large ribosomal subunit protein eL21 (rpl21e) of Thermoplasma acidophilum (strain ATCC 25905 / DSM 1728 / JCM 9062 / NBRC 15155 / AMRC-C165).